A 275-amino-acid chain; its full sequence is Ribosomal RNA small subunit methyltransferase A (275 aa).

Positions 20, 22, 47, 68, 90, and 110 each coordinate S-adenosyl-L-methionine.

The protein belongs to the class I-like SAM-binding methyltransferase superfamily. rRNA adenine N(6)-methyltransferase family. RsmA subfamily.

The protein localises to the cytoplasm. The enzyme catalyses adenosine(1518)/adenosine(1519) in 16S rRNA + 4 S-adenosyl-L-methionine = N(6)-dimethyladenosine(1518)/N(6)-dimethyladenosine(1519) in 16S rRNA + 4 S-adenosyl-L-homocysteine + 4 H(+). Functionally, specifically dimethylates two adjacent adenosines (A1518 and A1519) in the loop of a conserved hairpin near the 3'-end of 16S rRNA in the 30S particle. May play a critical role in biogenesis of 30S subunits. The chain is Ribosomal RNA small subunit methyltransferase A from Chlorobaculum tepidum (strain ATCC 49652 / DSM 12025 / NBRC 103806 / TLS) (Chlorobium tepidum).